The sequence spans 119 residues: MEFGLSWVFLVAILKGVQCEVQLVESGGGLVQPGGSLKLSCAASGFTFSGSAMHWVRQASGKGLEWVGRIRSKANSYATAYAASVKGRFTISRDDSKNTAYLQMNSLKTEDTAVYYCTR.

The first 19 residues, methionine 1–cysteine 19, serve as a signal peptide directing secretion. Positions glutamate 20–serine 44 are framework-1. In terms of domain architecture, Ig-like spans glutamate 20 to arginine 119. Cysteine 41 and cysteine 117 form a disulfide bridge. The tract at residues glycine 45–alanine 52 is complementarity-determining-1. The segment at methionine 53–arginine 69 is framework-2. A complementarity-determining-2 region spans residues isoleucine 70 to threonine 79. A framework-3 region spans residues alanine 80–cysteine 117. The complementarity-determining-3 stretch occupies residues threonine 118 to arginine 119.

Immunoglobulins are composed of two identical heavy chains and two identical light chains; disulfide-linked.

Its subcellular location is the secreted. It localises to the cell membrane. V region of the variable domain of immunoglobulin heavy chains that participates in the antigen recognition. Immunoglobulins, also known as antibodies, are membrane-bound or secreted glycoproteins produced by B lymphocytes. In the recognition phase of humoral immunity, the membrane-bound immunoglobulins serve as receptors which, upon binding of a specific antigen, trigger the clonal expansion and differentiation of B lymphocytes into immunoglobulins-secreting plasma cells. Secreted immunoglobulins mediate the effector phase of humoral immunity, which results in the elimination of bound antigens. The antigen binding site is formed by the variable domain of one heavy chain, together with that of its associated light chain. Thus, each immunoglobulin has two antigen binding sites with remarkable affinity for a particular antigen. The variable domains are assembled by a process called V-(D)-J rearrangement and can then be subjected to somatic hypermutations which, after exposure to antigen and selection, allow affinity maturation for a particular antigen. The protein is Immunoglobulin heavy variable 3-73 of Homo sapiens (Human).